A 446-amino-acid polypeptide reads, in one-letter code: MATILQNLPAGQKVGIAFSGGLDTSAALHWMKLKGALPYAYTANLGQPDEPDYDEIPRKALQYGAEKARLIDCRSQLAAEGIAALQSGAFHITTAGVTYFNTTPLGRAVTGTMLVSAMKDDDVNIWGDGSTFKGNDIERFYRYGLLTNPNLRIYKPWLDQLFIDELGGRAEMSAFMTQAGFGYKMSAEKAYSTDSNMLGATHEAKDLEHLNSGMKIVNPIMGVAFWKDEVEVKREEVTVRFEEGQPVALNGKTFSNTVELILEANRIGGRHGLGMSDQIENRIIEAKSRGIYEAPGLALLFIAYERLVTGIHNEDTIEQYRDNGRRLGRLLYQGRWFDPQAIMLRETAQRWVARAVTGEVTVELRRGNDYSILNTVSPNLTYKPERLSMEKVEDAPFSPLDRIGQLTMRNLDIVDTRDKLAIYTQAGLLSAGQGASPPQLKNDERK.

Residues 17–25 (AFSGGLDTS) and alanine 43 each bind ATP. Tyrosine 99 provides a ligand contact to L-citrulline. Residues glycine 129 and threonine 131 each contribute to the ATP site. The L-aspartate site is built by threonine 131, asparagine 135, and aspartate 136. Residue asparagine 135 participates in L-citrulline binding. Aspartate 136 contributes to the ATP binding site. Residues arginine 139 and serine 192 each contribute to the L-citrulline site. Aspartate 194 is a binding site for ATP. L-citrulline contacts are provided by threonine 201, glutamate 203, and glutamate 280.

This sequence belongs to the argininosuccinate synthase family. Type 2 subfamily. Homotetramer.

The protein resides in the cytoplasm. It catalyses the reaction L-citrulline + L-aspartate + ATP = 2-(N(omega)-L-arginino)succinate + AMP + diphosphate + H(+). It functions in the pathway amino-acid biosynthesis; L-arginine biosynthesis; L-arginine from L-ornithine and carbamoyl phosphate: step 2/3. The chain is Argininosuccinate synthase from Polaromonas sp. (strain JS666 / ATCC BAA-500).